The chain runs to 216 residues: ATP phosphoribosyltransferase (216 aa).

This sequence belongs to the ATP phosphoribosyltransferase family. Short subfamily. As to quaternary structure, heteromultimer composed of HisG and HisZ subunits.

The protein resides in the cytoplasm. It carries out the reaction 1-(5-phospho-beta-D-ribosyl)-ATP + diphosphate = 5-phospho-alpha-D-ribose 1-diphosphate + ATP. The protein operates within amino-acid biosynthesis; L-histidine biosynthesis; L-histidine from 5-phospho-alpha-D-ribose 1-diphosphate: step 1/9. In terms of biological role, catalyzes the condensation of ATP and 5-phosphoribose 1-diphosphate to form N'-(5'-phosphoribosyl)-ATP (PR-ATP). Has a crucial role in the pathway because the rate of histidine biosynthesis seems to be controlled primarily by regulation of HisG enzymatic activity. In Streptococcus thermophilus (strain ATCC BAA-491 / LMD-9), this protein is ATP phosphoribosyltransferase.